The primary structure comprises 74 residues: ATP synthase subunit c (74 aa).

Helical transmembrane passes span 8–28 (FIGA…VGNI) and 52–72 (IGFA…LMVL).

Belongs to the ATPase C chain family. In terms of assembly, F-type ATPases have 2 components, F(1) - the catalytic core - and F(0) - the membrane proton channel. F(1) has five subunits: alpha(3), beta(3), gamma(1), delta(1), epsilon(1). F(0) has three main subunits: a(1), b(2) and c(10-14). The alpha and beta chains form an alternating ring which encloses part of the gamma chain. F(1) is attached to F(0) by a central stalk formed by the gamma and epsilon chains, while a peripheral stalk is formed by the delta and b chains.

Its subcellular location is the cell inner membrane. F(1)F(0) ATP synthase produces ATP from ADP in the presence of a proton or sodium gradient. F-type ATPases consist of two structural domains, F(1) containing the extramembraneous catalytic core and F(0) containing the membrane proton channel, linked together by a central stalk and a peripheral stalk. During catalysis, ATP synthesis in the catalytic domain of F(1) is coupled via a rotary mechanism of the central stalk subunits to proton translocation. Its function is as follows. Key component of the F(0) channel; it plays a direct role in translocation across the membrane. A homomeric c-ring of between 10-14 subunits forms the central stalk rotor element with the F(1) delta and epsilon subunits. The polypeptide is ATP synthase subunit c (Paramagnetospirillum magneticum (strain ATCC 700264 / AMB-1) (Magnetospirillum magneticum)).